A 245-amino-acid chain; its full sequence is Ribonuclease 3 (245 aa).

Positions phenylalanine 19 to glycine 148 constitute an RNase III domain. Mg(2+) is bound at residue glutamate 61. Aspartate 65 is a catalytic residue. Mg(2+) is bound by residues aspartate 134 and glutamate 137. The active site involves glutamate 137. One can recognise a DRBM domain in the interval aspartate 174–glutamate 243.

It belongs to the ribonuclease III family. As to quaternary structure, homodimer. Mg(2+) serves as cofactor.

It is found in the cytoplasm. The enzyme catalyses Endonucleolytic cleavage to 5'-phosphomonoester.. Its function is as follows. Digests double-stranded RNA. Involved in the processing of primary rRNA transcript to yield the immediate precursors to the large and small rRNAs (23S and 16S). Processes some mRNAs, and tRNAs when they are encoded in the rRNA operon. Processes pre-crRNA and tracrRNA of type II CRISPR loci if present in the organism. This chain is Ribonuclease 3, found in Bacillus cereus (strain 03BB102).